We begin with the raw amino-acid sequence, 656 residues long: Pyoverdine export ATP-binding/permease protein PvdT (656 aa).

The 240-residue stretch at I6–V245 folds into the ABC transporter domain. Residue G43 to S50 participates in ATP binding. The next 4 helical transmembrane spans lie at A284 to G304, I538 to V558, L589 to L609, and V619 to M639.

Belongs to the ABC transporter superfamily. Macrolide exporter (TC 3.A.1.122) family. Part of the tripartite efflux system PvdRT-OpmQ, which is composed of an inner membrane component with both ATPase and permease domains, PvdT, a periplasmic membrane fusion protein, PvdR, and an outer membrane component, OpmQ.

The protein localises to the cell inner membrane. In terms of biological role, part of the tripartite efflux system PvdRT-OpmQ required for the secretion into the extracellular milieu of the siderophore pyoverdine (PVD), which is involved in iron acquisition. This subunit binds PVD and drives its secretion by hydrolyzing ATP. The system is responsible for export of newly synthesized PVD after the final steps of biosynthesis have taken place in the periplasm. It is also responsible for recycling of PVD after internalization of ferri-PVD into the periplasm by the outer-membrane receptor FpvA and release of iron from PVD, thus making PVD available for new cycles of iron uptake. The polypeptide is Pyoverdine export ATP-binding/permease protein PvdT (Pseudomonas savastanoi pv. phaseolicola (strain 1448A / Race 6) (Pseudomonas syringae pv. phaseolicola (strain 1448A / Race 6))).